Consider the following 433-residue polypeptide: MYILFSVLALSFIIFIHELGHFLFAKLFKVKVEVFSVGIGPSILKFKINNTEYRLSPILLGGYCKLKGFDHLEKELKANKELEADKDSLFGISHFKKILIYFAGPLFNLIFSFIVFIFISMAGVIYFDYSSRVSILNKDSLLKDKFRDGDVILKVNDKKIKYFSDLRKFIPEEKSTVMFDVLREKENITFKETVSLQDFLKEIGPWADLVIADVVSNSPAKIAGMKPGDEIISIDNVILKNKRDLDYFLKNLNSDVVEIKFSRNGEIFSSKLVFHDKNKMIGIYFSPPLKRVVKVENVSSAIKNSFFKVVSALQDILYSIFLLMTNFLNASKSVSGPVGIVGILSSSYSLGILYWINSISFLSLILAGMNLFFIVIPIFDGGQIFISFIELLRGKRFKAKTIYSFYSFGIFFGLFLFGLGLFNDLKGLLNIFN.

H17 lines the Zn(2+) pocket. E18 is an active-site residue. H21 lines the Zn(2+) pocket. A helical transmembrane segment spans residues 98-120; the sequence is ILIYFAGPLFNLIFSFIVFIFIS. The PDZ domain occupies 193-265; the sequence is TVSLQDFLKE…VVEIKFSRNG (73 aa). Helical transmembrane passes span 334–356, 366–388, and 401–423; these read VSGP…LYWI, LAGM…FISF, and TIYS…GLFN.

It belongs to the peptidase M50B family. It depends on Zn(2+) as a cofactor.

Its subcellular location is the cell inner membrane. This is Putative zinc metalloprotease BB_0118 from Borreliella burgdorferi (strain ATCC 35210 / DSM 4680 / CIP 102532 / B31) (Borrelia burgdorferi).